The sequence spans 137 residues: Protein phosphatase 1 regulatory subunit 1B (137 aa).

Residues 1–137 (DPKDRKKIQF…EEEEEEEDSQ (137 aa)) form a disordered region. T33 is subject to Phosphothreonine; by PKA. Basic and acidic residues predominate over residues 40–62 (LXEHSSPEEEASPHQRAAGEGHH). A phosphoserine mark is found at S44 and S45. T74 carries the post-translational modification Phosphothreonine; by CDK5. Residues 88-99 (HLQSISNLGENQ) are compositionally biased toward polar residues. S101 is subject to Phosphoserine. Residues 108–117 (GELRELGYPR) are compositionally biased toward basic and acidic residues. Positions 118 to 137 (EEEEEEEEDDEEEEEEEDSQ) are enriched in acidic residues. S136 bears the Phosphoserine mark.

Belongs to the protein phosphatase inhibitor 1 family. In terms of processing, phosphorylation of Thr-33 is required for activity. Post-translationally, dopamine- and cyclic AMP-regulated neuronal phosphoprotein.

The protein localises to the cytoplasm. Inhibitor of protein-phosphatase 1. In Sus scrofa (Pig), this protein is Protein phosphatase 1 regulatory subunit 1B (PPP1R1B).